The primary structure comprises 304 residues: Chromo domain-containing protein cec-1 (304 aa).

A Chromo domain is found at 8 to 66 (YTVESILEHRKKKGKSEFYIKWLGYDHTHNSWEPKENIVDPTLIEAFFTREAARKAEIK). A compositionally biased stretch (basic and acidic residues) spans 63–73 (AEIKAKKDKMA). Disordered stretches follow at residues 63-235 (AEIK…EIQL) and 248-304 (VEPA…AIIE). Low complexity predominate over residues 75 to 102 (GKKGASSKASASVSKASASTPARGAKAA). The span at 106–116 (PPKKSPPKRQR) shows a compositional bias: basic residues. The segment covering 122–141 (IRPDSDTDEEHSSADKKSKA) has biased composition (basic and acidic residues). Acidic residues-rich tracts occupy residues 142–152 (EDEEEVEDDEE), 163–204 (EEPE…DVQL), and 212–233 (EEEE…EEEI). A compositionally biased stretch (low complexity) spans 248 to 292 (VEPAVATPEPSEPSSSEKAVVENGSSSAAAGNSASKPEVSAVEVV). The segment covering 293 to 304 (TVEDDDDIAIIE) has biased composition (acidic residues).

It localises to the nucleus. The protein resides in the chromosome. This is Chromo domain-containing protein cec-1 (cec-1) from Caenorhabditis elegans.